Reading from the N-terminus, the 161-residue chain is Ribosome maturation factor RimP (161 aa).

It belongs to the RimP family.

The protein localises to the cytoplasm. Functionally, required for maturation of 30S ribosomal subunits. This is Ribosome maturation factor RimP from Rickettsia felis (strain ATCC VR-1525 / URRWXCal2) (Rickettsia azadi).